Reading from the N-terminus, the 350-residue chain is Dihydroorotate dehydrogenase (quinone) (350 aa).

Residues 59-63 and threonine 83 each bind FMN; that span reads AGLDK. Residue lysine 63 coordinates substrate. 108-112 provides a ligand contact to substrate; sequence NRMGF. FMN-binding residues include asparagine 136 and asparagine 169. A substrate-binding site is contributed by asparagine 169. Catalysis depends on serine 172, which acts as the Nucleophile. Asparagine 174 is a binding site for substrate. FMN-binding residues include lysine 214 and threonine 242. Position 243 to 244 (243 to 244) interacts with substrate; it reads NT. Residues glycine 265, glycine 294, and 315–316 each bind FMN; that span reads YS.

This sequence belongs to the dihydroorotate dehydrogenase family. Type 2 subfamily. As to quaternary structure, monomer. The cofactor is FMN.

The protein resides in the cell membrane. The catalysed reaction is (S)-dihydroorotate + a quinone = orotate + a quinol. It participates in pyrimidine metabolism; UMP biosynthesis via de novo pathway; orotate from (S)-dihydroorotate (quinone route): step 1/1. Its function is as follows. Catalyzes the conversion of dihydroorotate to orotate with quinone as electron acceptor. The polypeptide is Dihydroorotate dehydrogenase (quinone) (Aromatoleum aromaticum (strain DSM 19018 / LMG 30748 / EbN1) (Azoarcus sp. (strain EbN1))).